We begin with the raw amino-acid sequence, 32 residues long: MSDIN-like toxin proprotein 1 (32 aa).

Positions 1-10 (MSDINATRLP) are excised as a propeptide. The cyclopeptide (Ile-Pro) cross-link spans 11–18 (IFWFIYFP). The propeptide occupies 19–32 (CVSDVDSTLTRGER).

The protein belongs to the MSDIN fungal toxin family. Processed by the macrocyclase-peptidase enzyme POPB to yield a toxic cyclic octapeptide. POPB first removes 10 residues from the N-terminus. Conformational trapping of the remaining peptide forces the enzyme to release this intermediate rather than proceed to macrocyclization. The enzyme rebinds the remaining peptide in a different conformation and catalyzes macrocyclization of the N-terminal 8 residues. Expressed in basidiocarps.

Probable toxin that belongs to the MSDIN-like toxin family responsible for a large number of food poisoning cases and deaths. The chain is MSDIN-like toxin proprotein 1 from Amanita exitialis (Guangzhou destroying angel).